Consider the following 238-residue polypeptide: Probable transcriptional regulatory protein llmg_0242 (238 aa).

The protein belongs to the TACO1 family. YeeN subfamily.

Its subcellular location is the cytoplasm. This chain is Probable transcriptional regulatory protein llmg_0242, found in Lactococcus lactis subsp. cremoris (strain MG1363).